A 280-amino-acid chain; its full sequence is Probable N-acetyltransferase 14 (280 aa).

A run of 2 helical transmembrane segments spans residues 37 to 57 (LILHLLTRPLALLLLAILSSI) and 60 to 80 (CVLHSFVLALVIPVFISVIYL). Positions 111 to 152 (PDLPNPHLGRAKLTTNQEKTRRRKKAKEKEKMNESEQVDEDE) are disordered. The N-acetyltransferase domain maps to 116–273 (PHLGRAKLTT…EKGWLGYPLT (158 aa)).

Belongs to the camello family.

The protein resides in the membrane. Functionally, probable acetyltransferase. The sequence is that of Probable N-acetyltransferase 14 (nat14) from Danio rerio (Zebrafish).